The sequence spans 145 residues: MEITKEIFSLIAAVMLLLGSFIALISAIGIVKFQDVFLRSHAATKSSTLSVLLTLIGVLIYFIVNTGFFSVRLLLSLVFINLTSPVGMHLVARAAYRNGAYMYRKNDDHTHASILLSSNEQNSTKALQLRAKKREEYRKKWYQND.

Helical transmembrane passes span 11 to 31 (IAAVMLLLGSFIALISAIGIV), 51 to 71 (VLLTLIGVLIYFIVNTGFFSV), and 72 to 92 (RLLLSLVFINLTSPVGMHLVA).

This sequence belongs to the CPA3 antiporters (TC 2.A.63) subunit G family. In terms of assembly, may form a heterooligomeric complex that consists of seven subunits: mnhA2, mnhB2, mnhC2, mnhD2, mnhE2, mnhF2 and mnhG2.

It is found in the cell membrane. This is Putative antiporter subunit mnhG2 (mnhG2) from Staphylococcus aureus (strain MRSA252).